Consider the following 399-residue polypeptide: Subtilisin-like protease 4 (399 aa).

The signal sequence occupies residues 1-19 (MVCLKTLSVFLAAFAAADA). Residues 20 to 118 (RAVFKTQGHK…VEQDQVVRIS (99 aa)) constitute a propeptide that is removed on maturation. Residues 38–117 (YIVVMKDGVS…YVEQDQVVRI (80 aa)) enclose the Inhibitor I9 domain. An N-linked (GlcNAc...) asparagine glycan is attached at Asn-102. The Peptidase S8 domain maps to 128 to 399 (SWGLGRVSHR…NRLLYNGSGQ (272 aa)). Residues Asp-160 and His-191 each act as charge relay system in the active site. Residues Asn-252 and Asn-308 are each glycosylated (N-linked (GlcNAc...) asparagine). Ser-346 functions as the Charge relay system in the catalytic mechanism. Residue Asn-395 is glycosylated (N-linked (GlcNAc...) asparagine).

The protein belongs to the peptidase S8 family.

Its subcellular location is the secreted. In terms of biological role, secreted subtilisin-like serine protease with keratinolytic activity that contributes to pathogenicity. The protein is Subtilisin-like protease 4 (SUB4) of Trichophyton tonsurans (Scalp ringworm fungus).